The sequence spans 342 residues: Holliday junction branch migration complex subunit RuvB (342 aa).

Residues 1–181 (MENRMVTPFD…FGMLCAMEFY (181 aa)) form a large ATPase domain (RuvB-L) region. ATP contacts are provided by residues Leu20, Arg21, Gly62, Lys65, Thr66, Thr67, 128-130 (EDY), Arg171, Tyr181, and Arg218. Mg(2+) is bound at residue Thr66. Residues 182-252 (TDEELMEIVV…GAKAALDLLE (71 aa)) form a small ATPAse domain (RuvB-S) region. The interval 255-342 (KEGLDKIDNK…KDNQVSIFNK (88 aa)) is head domain (RuvB-H). Residues Arg310 and Arg315 each contribute to the DNA site.

Belongs to the RuvB family. Homohexamer. Forms an RuvA(8)-RuvB(12)-Holliday junction (HJ) complex. HJ DNA is sandwiched between 2 RuvA tetramers; dsDNA enters through RuvA and exits via RuvB. An RuvB hexamer assembles on each DNA strand where it exits the tetramer. Each RuvB hexamer is contacted by two RuvA subunits (via domain III) on 2 adjacent RuvB subunits; this complex drives branch migration. In the full resolvosome a probable DNA-RuvA(4)-RuvB(12)-RuvC(2) complex forms which resolves the HJ.

It localises to the cytoplasm. It catalyses the reaction ATP + H2O = ADP + phosphate + H(+). In terms of biological role, the RuvA-RuvB-RuvC complex processes Holliday junction (HJ) DNA during genetic recombination and DNA repair, while the RuvA-RuvB complex plays an important role in the rescue of blocked DNA replication forks via replication fork reversal (RFR). RuvA specifically binds to HJ cruciform DNA, conferring on it an open structure. The RuvB hexamer acts as an ATP-dependent pump, pulling dsDNA into and through the RuvAB complex. RuvB forms 2 homohexamers on either side of HJ DNA bound by 1 or 2 RuvA tetramers; 4 subunits per hexamer contact DNA at a time. Coordinated motions by a converter formed by DNA-disengaged RuvB subunits stimulates ATP hydrolysis and nucleotide exchange. Immobilization of the converter enables RuvB to convert the ATP-contained energy into a lever motion, pulling 2 nucleotides of DNA out of the RuvA tetramer per ATP hydrolyzed, thus driving DNA branch migration. The RuvB motors rotate together with the DNA substrate, which together with the progressing nucleotide cycle form the mechanistic basis for DNA recombination by continuous HJ branch migration. Branch migration allows RuvC to scan DNA until it finds its consensus sequence, where it cleaves and resolves cruciform DNA. The chain is Holliday junction branch migration complex subunit RuvB from Clostridium botulinum (strain 657 / Type Ba4).